We begin with the raw amino-acid sequence, 638 residues long: Probable lysine-specific demethylase 4F (638 aa).

The JmjN domain occupies Ile15 to Arg57. Tyr133 contributes to the 2-oxoglutarate binding site. In terms of domain architecture, JmjC spans Glu143–Cys309. Residues His189 and Glu191 each coordinate Fe cation. The 2-oxoglutarate site is built by Asn199 and Lys207. Zn(2+) is bound by residues Cys235 and His241. A 2-oxoglutarate-binding site is contributed by Lys242. His277 contacts Fe cation. The Zn(2+) site is built by Cys307 and Cys309. Positions Pro426 to Lys474 are disordered. The span at Gly431 to Arg443 shows a compositional bias: basic residues.

This sequence belongs to the JHDM3 histone demethylase family. The cofactor is Fe(2+).

The protein localises to the nucleus. The catalysed reaction is N(6),N(6),N(6)-trimethyl-L-lysyl(9)-[histone H3] + 2 2-oxoglutarate + 2 O2 = N(6)-methyl-L-lysyl(9)-[histone H3] + 2 formaldehyde + 2 succinate + 2 CO2. Probable histone demethylase that specifically demethylates 'Lys-9' of histone H3, thereby playing a central role in histone code. This is Probable lysine-specific demethylase 4F from Homo sapiens (Human).